Reading from the N-terminus, the 1350-residue chain is uncharacterized protein (1350 aa).

2 disordered regions span residues 348-371 (SLVG…LDDS) and 923-944 (SKME…RGTG). Over residues 923–932 (SKMEGGERDA) the composition is skewed to basic and acidic residues.

This is an uncharacterized protein from Ictalurid herpesvirus 1 (strain Auburn) (IcHV-1).